The primary structure comprises 989 residues: R3H domain-containing protein 2 (989 aa).

2 disordered regions span residues 23-71 (EESV…AKSN) and 106-147 (SCPS…QEYT). Over residues 36-56 (PSKEEIEKESEDTSLRQETQR) the composition is skewed to basic and acidic residues. Phosphoserine is present on serine 37. Positions 58–71 (TSNHGHARKRAKSN) are enriched in basic residues. Positions 109–143 (SDKEEEKSTKDVSEKEDKDKNKEKVPRRMLSRDSS) are enriched in basic and acidic residues. Position 143 is a phosphoserine (serine 143). One can recognise an R3H domain in the interval 169–232 (RMMLLKLEQE…AVIINKTSNT (64 aa)). Residues 233–303 (RIPEQRFSEH…VRERIFARET (71 aa)) form the SUZ domain. Disordered stretches follow at residues 267-288 (DDNQ…EERE), 306-390 (NGYL…ISRP), 416-479 (TAQQ…FQPP), 493-524 (ASTG…GYMQ), 674-738 (GTSP…PSMV), 751-793 (RGQK…SLSN), and 848-867 (QGQS…LKSA). Basic and acidic residues predominate over residues 277-288 (DGRRSKSIEERE). Low complexity predominate over residues 320-331 (SRTSSSRQSSTD). Residues serine 344, serine 347, and serine 363 each carry the phosphoserine modification. The span at 416-428 (TAQQQQQQQQQLP) shows a compositional bias: low complexity. Composition is skewed to polar residues over residues 454–466 (PFGQ…QGST) and 493–517 (ASTG…QQVL). Over residues 695–704 (SPSPCSPPQM) the composition is skewed to pro residues. A compositionally biased stretch (low complexity) spans 705 to 727 (PQQYSGVSPSGPGVVVMQLNVPN). The span at 761–771 (PESSPQANTQM) shows a compositional bias: polar residues. The span at 772–790 (SSSPVTSPTQSPAPSPVTS) shows a compositional bias: low complexity. Phosphoserine is present on residues serine 866 and serine 868. Residues threonine 869 and threonine 873 each carry the phosphothreonine modification.

Its subcellular location is the nucleus. The protein is R3H domain-containing protein 2 (R3HDM2) of Bos taurus (Bovine).